The chain runs to 157 residues: Selenoprotein F (157 aa).

Residues 1 to 19 form the signal peptide; the sequence is MSGEVYILWLLSLIQTLSA. Sec-84 is a non-standard amino acid (selenocysteine).

Belongs to the selenoprotein M/F family. As to expression, expressed in the brain, liver and retina. Localized to the retinal ganglion cell layer, the inner nuclear layer and the outer nuclear layer at both parr and smolt stages.

It is found in the endoplasmic reticulum lumen. In terms of biological role, may be involved in redox reactions associated with the formation of disulfide bonds. May contribute to the quality control of protein folding in the endoplasmic reticulum. May be involved in retinal development. This Oncorhynchus mykiss (Rainbow trout) protein is Selenoprotein F.